The sequence spans 232 residues: Enolase-phosphatase E1 (232 aa).

It belongs to the HAD-like hydrolase superfamily. MasA/MtnC family. As to quaternary structure, monomer. Requires Mg(2+) as cofactor.

The catalysed reaction is 5-methylsulfanyl-2,3-dioxopentyl phosphate + H2O = 1,2-dihydroxy-5-(methylsulfanyl)pent-1-en-3-one + phosphate. It functions in the pathway amino-acid biosynthesis; L-methionine biosynthesis via salvage pathway; L-methionine from S-methyl-5-thio-alpha-D-ribose 1-phosphate: step 3/6. The protein operates within amino-acid biosynthesis; L-methionine biosynthesis via salvage pathway; L-methionine from S-methyl-5-thio-alpha-D-ribose 1-phosphate: step 4/6. Functionally, bifunctional enzyme that catalyzes the enolization of 2,3-diketo-5-methylthiopentyl-1-phosphate (DK-MTP-1-P) into the intermediate 2-hydroxy-3-keto-5-methylthiopentenyl-1-phosphate (HK-MTPenyl-1-P), which is then dephosphorylated to form the acireductone 1,2-dihydroxy-3-keto-5-methylthiopentene (DHK-MTPene). The chain is Enolase-phosphatase E1 from Acidiphilium cryptum (strain JF-5).